Here is a 60-residue protein sequence, read N- to C-terminus: MAVPARRTSKAKKNKRRTHYKVTAPTVTFDETTGDYSRSHRVSLKGYYKGRKIAKAAAAE.

Belongs to the bacterial ribosomal protein bL32 family.

The polypeptide is Large ribosomal subunit protein bL32 (Streptococcus sanguinis (strain SK36)).